The following is a 151-amino-acid chain: Probable cGMP 3',5'-cyclic phosphodiesterase subunit delta (151 aa).

It belongs to the PDE6D/unc-119 family. As to quaternary structure, interacts with Pde6.

It is found in the nucleus. Its subcellular location is the cytoplasm. In Drosophila sechellia (Fruit fly), this protein is Probable cGMP 3',5'-cyclic phosphodiesterase subunit delta.